The primary structure comprises 89 residues: Exodeoxyribonuclease 7 small subunit (89 aa).

Belongs to the XseB family. As to quaternary structure, heterooligomer composed of large and small subunits.

The protein localises to the cytoplasm. The catalysed reaction is Exonucleolytic cleavage in either 5'- to 3'- or 3'- to 5'-direction to yield nucleoside 5'-phosphates.. In terms of biological role, bidirectionally degrades single-stranded DNA into large acid-insoluble oligonucleotides, which are then degraded further into small acid-soluble oligonucleotides. This Chlorobium phaeobacteroides (strain DSM 266 / SMG 266 / 2430) protein is Exodeoxyribonuclease 7 small subunit.